A 261-amino-acid chain; its full sequence is Proliferating cell nuclear antigen (261 aa).

N6-acetyllysine is present on residues Lys-14, Lys-77, and Lys-80. A DNA-binding region spans residues 61 to 80 (RCDRNLAMGVNLTSMSKILK). Cys-135 and Cys-162 are disulfide-bonded. Lys-164 is covalently cross-linked (Glycyl lysine isopeptide (Lys-Gly) (interchain with G-Cter in SUMO2); alternate). Lys-164 is covalently cross-linked (Glycyl lysine isopeptide (Lys-Gly) (interchain with G-Cter in ubiquitin); alternate). Position 211 is a phosphotyrosine; by EGFR (Tyr-211). Lys-248 is modified (N6-acetyllysine). Lys-254 participates in a covalent cross-link: Glycyl lysine isopeptide (Lys-Gly) (interchain with G-Cter in SUMO2).

Belongs to the PCNA family. As to quaternary structure, homotrimer. Interacts with p300/EP300; the interaction occurs on chromatin in UV-irradiated damaged cells. Interacts with CREBBP (via transactivation domain and C-terminus); the interaction occurs on chromatin in UV-irradiated damaged cells. Directly interacts with POLD1, POLD3 and POLD4 subunits of the DNA polymerase delta complex, POLD3 being the major interacting partner; the interaction with POLD3 is inhibited by CDKN1A/p21(CIP1). Forms a complex with activator 1 heteropentamer in the presence of ATP. Interacts with EXO1, POLH, POLK, DNMT1, ERCC5, FEN1, CDC6 and POLDIP2. Interacts with POLB. Interacts with APEX2; this interaction is triggered by reactive oxygen species and increased by misincorporation of uracil in nuclear DNA. Forms a ternary complex with DNTTIP2 and core histone. Interacts with KCTD10. Interacts with PPP1R15A. Interacts with SMARCA5/SNF2H. Interacts with BAZ1B/WSTF; the interaction is direct and is required for BAZ1B/WSTF binding to replication foci during S phase. Interacts with HLTF and SHPRH. Interacts with NUDT15. Interaction is disrupted in response to UV irradiation and acetylation. Interacts with CDKN1A/p21(CIP1) and CDT1; interacts via their PIP-box which also recruits the DCX(DTL) complex. The interaction with CDKN1A inhibits POLD3 binding. Interacts with DDX11. Interacts with EGFR; positively regulates PCNA. Interacts with PARPBP. Interacts (when ubiquitinated) with SPRTN; leading to enhance RAD18-mediated PCNA ubiquitination. Interacts (when polyubiquitinated) with ZRANB3. Interacts with SMARCAD1. Interacts with CDKN1C. Interacts with PCLAF (via PIP-box). Interacts with RTEL1 (via PIP-box); the interaction is direct and essential for the suppression of telomere fragility. Interacts with FAM111A (via PIP-box); the interaction is direct and required for PCNA loading on chromatin binding. Interacts with LIG1. Interacts with SETMAR. Interacts with ANKRD17. Interacts with FBXO18/FBH1 (via PIP-box); the interaction recruits the DCX(DTL) complex and promotes ubiquitination and degradation of FBXO18/FBH1. Interacts with POLN. Interacts with SDE2 (via PIP-box); the interaction is direct and prevents ultraviolet light induced monoubiquitination. Component of the replisome complex composed of at least DONSON, MCM2, MCM7, PCNA and TICRR; interaction at least with PCNA occurs during DNA replication. Interacts with MAPK15; the interaction is chromatin binding dependent and prevents MDM2-mediated PCNA destruction by inhibiting the association of PCNA with MDM2. Interacts with PARP10 (via PIP-box). Interacts with DDI2. Interacts with HMCES (via PIP-box). Interacts with TRAIP (via PIP-box). Interacts with UHRF2. Interacts with ALKBH2; this interaction is enhanced during the S-phase of the cell cycle. Interacts with ATAD5; the interaction promotes USP1-mediated PCNA deubiquitination. Interacts (when phosphorylated) with GRB2. Interacts with ANG. Interacts with nuclear UNG; this interaction mediates UNG recruitment to S-phase replication foci. Interacts with ERCC6L2 (via an atypical PIP-box); this interaction facilitates cenrtomeric localization of ERCC6L2. Post-translationally, phosphorylated. Phosphorylation at Tyr-211 by EGFR stabilizes chromatin-associated PCNA. In terms of processing, acetylated by CREBBP and p300/EP300; preferentially acetylated by CREBBP on Lys-80, Lys-13 and Lys-14 and on Lys-77 by p300/EP300 upon loading on chromatin in response to UV irradiation. Lysine acetylation disrupts association with chromatin, hence promoting PCNA ubiquitination and proteasomal degradation in response to UV damage in a CREBBP- and EP300-dependent manner. Acetylation disrupts interaction with NUDT15 and promotes degradation. Ubiquitinated. Following DNA damage, can be either monoubiquitinated to stimulate direct bypass of DNA lesions by specialized DNA polymerases or polyubiquitinated to promote recombination-dependent DNA synthesis across DNA lesions by template switching mechanisms. Following induction of replication stress, monoubiquitinated by the UBE2B-RAD18 complex on Lys-164, leading to recruit translesion (TLS) polymerases, which are able to synthesize across DNA lesions in a potentially error-prone manner. An error-free pathway also exists and requires non-canonical polyubiquitination on Lys-164 through 'Lys-63' linkage of ubiquitin moieties by the E2 complex UBE2N-UBE2V2 and the E3 ligases, HLTF, RNF8 and SHPRH. This error-free pathway, also known as template switching, employs recombination mechanisms to synthesize across the lesion, using as a template the undamaged, newly synthesized strand of the sister chromatid. Monoubiquitination at Lys-164 also takes place in undamaged proliferating cells, and is mediated by the DCX(DTL) complex, leading to enhance PCNA-dependent translesion DNA synthesis. Sumoylated during S phase. Post-translationally, methylated on glutamate residues by ARMT1.

It is found in the nucleus. Its function is as follows. Auxiliary protein of DNA polymerase delta and epsilon, is involved in the control of eukaryotic DNA replication by increasing the polymerase's processibility during elongation of the leading strand. Induces a robust stimulatory effect on the 3'-5' exonuclease and 3'-phosphodiesterase, but not apurinic-apyrimidinic (AP) endonuclease, APEX2 activities. Has to be loaded onto DNA in order to be able to stimulate APEX2. Plays a key role in DNA damage response (DDR) by being conveniently positioned at the replication fork to coordinate DNA replication with DNA repair and DNA damage tolerance pathways. Acts as a loading platform to recruit DDR proteins that allow completion of DNA replication after DNA damage and promote postreplication repair: Monoubiquitinated PCNA leads to recruitment of translesion (TLS) polymerases, while 'Lys-63'-linked polyubiquitination of PCNA is involved in error-free pathway and employs recombination mechanisms to synthesize across the lesion. In Rattus norvegicus (Rat), this protein is Proliferating cell nuclear antigen (Pcna).